The primary structure comprises 176 residues: RNA pyrophosphohydrolase (176 aa).

The region spanning 6–149 (GYRPNVGIVI…KRDVYRRVMK (144 aa)) is the Nudix hydrolase domain. A Nudix box motif is present at residues 38–59 (GGINPGESAEQAMYRELFEEVG).

This sequence belongs to the Nudix hydrolase family. RppH subfamily. A divalent metal cation is required as a cofactor.

Functionally, accelerates the degradation of transcripts by removing pyrophosphate from the 5'-end of triphosphorylated RNA, leading to a more labile monophosphorylated state that can stimulate subsequent ribonuclease cleavage. This Shigella dysenteriae serotype 1 (strain Sd197) protein is RNA pyrophosphohydrolase.